Here is a 105-residue protein sequence, read N- to C-terminus: MVVMSAPTEPKSRPGTTGQRESAPEDVTASPWVTIVWDDPVNLMTYVTYVFQKLFGYSEPHATKLMLQVHNEGKAVVSAGSREAMEVDVSKLHAAGLWATMQQDR.

Residues 1-27 (MVVMSAPTEPKSRPGTTGQRESAPEDV) are disordered.

The protein belongs to the ClpS family. In terms of assembly, binds to the N-terminal domain of the chaperone ClpA.

Functionally, involved in the modulation of the specificity of the ClpAP-mediated ATP-dependent protein degradation. The polypeptide is ATP-dependent Clp protease adapter protein ClpS (Mycolicibacterium paratuberculosis (strain ATCC BAA-968 / K-10) (Mycobacterium paratuberculosis)).